A 151-amino-acid chain; its full sequence is US8.5 protein (151 aa).

The tract at residues 27-107 (SSQPLDPEGP…APSPHPRPPG (81 aa)) is disordered. Positions 80-91 (SDERGPPRHDRP) are enriched in basic and acidic residues.

The protein localises to the host nucleus. The protein resides in the host nucleolus. The protein is US8.5 protein (US8.5) of Human herpesvirus 1 (strain F) (HHV-1).